A 153-amino-acid chain; its full sequence is Riboflavin synthase (153 aa).

This sequence belongs to the DMRL synthase family. As to quaternary structure, homooligomer. Mg(2+) is required as a cofactor.

The catalysed reaction is 2 6,7-dimethyl-8-(1-D-ribityl)lumazine + H(+) = 5-amino-6-(D-ribitylamino)uracil + riboflavin. It participates in cofactor biosynthesis; riboflavin biosynthesis; riboflavin from 2-hydroxy-3-oxobutyl phosphate and 5-amino-6-(D-ribitylamino)uracil: step 2/2. Its activity is regulated as follows. Inhibited by EDTA. This Methanothermobacter thermautotrophicus (strain ATCC 29096 / DSM 1053 / JCM 10044 / NBRC 100330 / Delta H) (Methanobacterium thermoautotrophicum) protein is Riboflavin synthase (ribC).